We begin with the raw amino-acid sequence, 108 residues long: Phosphoribosyl-ATP pyrophosphatase (108 aa).

This sequence belongs to the PRA-PH family.

The protein localises to the cytoplasm. The catalysed reaction is 1-(5-phospho-beta-D-ribosyl)-ATP + H2O = 1-(5-phospho-beta-D-ribosyl)-5'-AMP + diphosphate + H(+). Its pathway is amino-acid biosynthesis; L-histidine biosynthesis; L-histidine from 5-phospho-alpha-D-ribose 1-diphosphate: step 2/9. The protein is Phosphoribosyl-ATP pyrophosphatase of Dechloromonas aromatica (strain RCB).